The following is a 435-amino-acid chain: Methylenetetrahydrofolate--tRNA-(uracil-5-)-methyltransferase TrmFO (435 aa).

7 to 12 (GAGLAG) contacts FAD.

This sequence belongs to the MnmG family. TrmFO subfamily. The cofactor is FAD.

Its subcellular location is the cytoplasm. It carries out the reaction uridine(54) in tRNA + (6R)-5,10-methylene-5,6,7,8-tetrahydrofolate + NADH + H(+) = 5-methyluridine(54) in tRNA + (6S)-5,6,7,8-tetrahydrofolate + NAD(+). The catalysed reaction is uridine(54) in tRNA + (6R)-5,10-methylene-5,6,7,8-tetrahydrofolate + NADPH + H(+) = 5-methyluridine(54) in tRNA + (6S)-5,6,7,8-tetrahydrofolate + NADP(+). In terms of biological role, catalyzes the folate-dependent formation of 5-methyl-uridine at position 54 (M-5-U54) in all tRNAs. This is Methylenetetrahydrofolate--tRNA-(uracil-5-)-methyltransferase TrmFO from Thermotoga neapolitana (strain ATCC 49049 / DSM 4359 / NBRC 107923 / NS-E).